The sequence spans 350 residues: tRNA uridine(34) hydroxylase (350 aa).

The Rhodanese domain maps to 146–240 (DDPDALFIDM…YARKAREQGL (95 aa)). C200 serves as the catalytic Cysteine persulfide intermediate.

The protein belongs to the TrhO family.

It carries out the reaction uridine(34) in tRNA + AH2 + O2 = 5-hydroxyuridine(34) in tRNA + A + H2O. Catalyzes oxygen-dependent 5-hydroxyuridine (ho5U) modification at position 34 in tRNAs, the first step in 5-carboxymethoxyuridine (cmo5U) biosynthesis. May be part of an alternate pathway, which is able to bypass cmo5U biogenesis in a subset of tRNAs under aerobic conditions. The polypeptide is tRNA uridine(34) hydroxylase (Escherichia coli O9:H4 (strain HS)).